Reading from the N-terminus, the 224-residue chain is Protein HLJ1 (224 aa).

The J domain maps to 18–87 (DKHEFYEILK…RSIYDRIGRD (70 aa)). Residues 84-93 (IGRDPDDRQM) are compositionally biased toward basic and acidic residues. Residues 84-107 (IGRDPDDRQMPSRGAASGFRGSAG) are disordered. Ser109 is subject to Phosphoserine. The disordered stretch occupies residues 173 to 192 (NRGGSPFMRQQPRSRQQQQQ). The segment covering 181 to 192 (RQQPRSRQQQQQ) has biased composition (low complexity).

The chain is Protein HLJ1 (HLJ1) from Saccharomyces cerevisiae (strain ATCC 204508 / S288c) (Baker's yeast).